The sequence spans 304 residues: Small glutamine-rich tetratricopeptide repeat-containing protein beta (304 aa).

TPR repeat units follow at residues 15-49 (LREQSQMDAYTSDEQESLEVAIQCLETVFKISPED), 85-118 (ADQLKDEGNNHMKEENYAAAVDCYTQAIELDPNN), 120-152 (VYYCNRAAAQSKLSHYTDAIKDCEKAIAIDSKY), and 153-186 (SKAYGRMGLALTAMNKFEEAVTSYQKALDLDPEN). K131 is modified (N6-acetyllysine). Phosphoserine is present on residues S293, S295, and S297.

Belongs to the SGT family. In terms of assembly, homooligomerize. As to expression, expressed specifically in brain.

In terms of biological role, co-chaperone that binds directly to HSC70 and HSP70 and regulates their ATPase activity. The chain is Small glutamine-rich tetratricopeptide repeat-containing protein beta (Sgtb) from Rattus norvegicus (Rat).